The chain runs to 371 residues: 4-hydroxy-3-methylbut-2-en-1-yl diphosphate synthase (flavodoxin) (371 aa).

Cysteine 270, cysteine 273, cysteine 305, and glutamate 312 together coordinate [4Fe-4S] cluster.

This sequence belongs to the IspG family. The cofactor is [4Fe-4S] cluster.

It catalyses the reaction (2E)-4-hydroxy-3-methylbut-2-enyl diphosphate + oxidized [flavodoxin] + H2O + 2 H(+) = 2-C-methyl-D-erythritol 2,4-cyclic diphosphate + reduced [flavodoxin]. The protein operates within isoprenoid biosynthesis; isopentenyl diphosphate biosynthesis via DXP pathway; isopentenyl diphosphate from 1-deoxy-D-xylulose 5-phosphate: step 5/6. Converts 2C-methyl-D-erythritol 2,4-cyclodiphosphate (ME-2,4cPP) into 1-hydroxy-2-methyl-2-(E)-butenyl 4-diphosphate. The protein is 4-hydroxy-3-methylbut-2-en-1-yl diphosphate synthase (flavodoxin) of Shewanella sp. (strain W3-18-1).